A 152-amino-acid chain; its full sequence is Succinate dehydrogenase [ubiquinone] cytochrome b small subunit, mitochondrial (152 aa).

The transit peptide at 1-21 (MATLLRVSSLCRANRASAFKS) directs the protein to the mitochondrion. Residues 22–56 (LLIRPVPCLTQDHHMVQTSQIHTSPNHHAGSKAAS) lie on the Mitochondrial matrix side of the membrane. A helical transmembrane segment spans residues 57 to 78 (MHWTSERALSVALLGLLPAAYL). At 79–83 (YPGAA) the chain is on the mitochondrial intermembrane side. The helical transmembrane segment at 84 to 104 (MDYSLAAALTLHGHWGLGQVV) threads the bilayer. Residue H95 participates in heme b binding. Residues 105–113 (TDYVHGDAK) are Mitochondrial matrix-facing. Y107 provides a ligand contact to a ubiquinone. The chain crosses the membrane as a helical span at residues 114–135 (IKMANTSLFALSALTFAGLCYF). Residues 136-152 (NYHDVGICKAVSMLWSL) lie on the Mitochondrial intermembrane side of the membrane.

Belongs to the CybS family. Component of complex II composed of four subunits: the flavoprotein (FP) SDHA, iron-sulfur protein (IP) SDHB, and a cytochrome b560 composed of SDHC and SDHD.

It localises to the mitochondrion inner membrane. The protein operates within carbohydrate metabolism; tricarboxylic acid cycle. Functionally, membrane-anchoring subunit of succinate dehydrogenase (SDH) that is involved in complex II of the mitochondrial electron transport chain and is responsible for transferring electrons from succinate to ubiquinone (coenzyme Q). SDH also oxidizes malate to the non-canonical enol form of oxaloacetate, enol-oxaloacetate. Enol-oxaloacetate, which is a potent inhibitor of the succinate dehydrogenase activity, is further isomerized into keto-oxaloacetate. In Xenopus tropicalis (Western clawed frog), this protein is Succinate dehydrogenase [ubiquinone] cytochrome b small subunit, mitochondrial (sdhd).